Consider the following 140-residue polypeptide: L-fucose mutarotase (140 aa).

Residue His-22 is the Proton donor of the active site. Residues Asp-30, Arg-107, and 129 to 131 each bind substrate; that span reads YGN.

Belongs to the RbsD / FucU family. FucU mutarotase subfamily. Homodecamer.

It localises to the cytoplasm. The catalysed reaction is alpha-L-fucose = beta-L-fucose. It functions in the pathway carbohydrate metabolism; L-fucose metabolism. Its function is as follows. Involved in the anomeric conversion of L-fucose. In Salmonella arizonae (strain ATCC BAA-731 / CDC346-86 / RSK2980), this protein is L-fucose mutarotase.